An 83-amino-acid polypeptide reads, in one-letter code: MNKETQPIDRETLLKEANKIIREHEDTLAGIEATGVTQRNGVLVFTGDYFLDEQGLPTAKSTAVFNMFKHLAHVLSEKYHLVD.

In Escherichia coli O157:H7, this protein is Protein YciN (yciN).